The primary structure comprises 317 residues: Apolipoprotein E (317 aa).

The N-terminal stretch at 1–18 (MKVLWAALLVTFLAGCQA) is a signal peptide. 8 repeat units span residues 80–101 (ALMD…EQLT), 102–123 (PVAE…ARLG), 124–145 (ADME…AMLG), 146–167 (QSTE…KRLL), 168–189 (RDAD…EGAE), 190–211 (RGVS…VRAA), 212–233 (TVGS…ERLR), and 234–255 (ARME…EQVA). Residues 80-255 (ALMDETMKEL…RLDEVKEQVA (176 aa)) form an 8 X 22 AA approximate tandem repeats region. Methionine sulfoxide is present on M143. S147 bears the Phosphoserine mark. An LDL and other lipoprotein receptors binding region spans residues 158–168 (HLRKLRKRLLR). 162–165 (LRKR) provides a ligand contact to heparin. Residues 210 to 290 (AATVGSVAGK…SWFEPLVEDM (81 aa)) are lipid-binding and lipoprotein association. 229 to 236 (GERLRARM) provides a ligand contact to heparin. The segment at 266–317 (QQIRLQAEAFQARLKSWFEPLVEDMQRQWAGLVEKVQAAVGTSAAPVPSDNH) is homooligomerization. Residues 278 to 290 (RLKSWFEPLVEDM) form a specificity for association with VLDL region.

The protein belongs to the apolipoprotein A1/A4/E family. Homotetramer. May interact with ABCA1; functionally associated with ABCA1 in the biogenesis of HDLs. May interact with APP/A4 amyloid-beta peptide; the interaction is extremely stable in vitro but its physiological significance is unclear. May interact with MAPT. May interact with MAP2. In the cerebrospinal fluid, interacts with secreted SORL1. Interacts with PMEL; this allows the loading of PMEL luminal fragment on ILVs to induce fibril nucleation. APOE exists as multiple glycosylated and sialylated glycoforms within cells and in plasma. The extent of glycosylation and sialylation are tissue and context specific. In terms of processing, glycated in plasma VLDL. Post-translationally, phosphorylated by FAM20C in the extracellular medium.

It localises to the secreted. The protein localises to the extracellular space. It is found in the extracellular matrix. Its subcellular location is the extracellular vesicle. The protein resides in the endosome. It localises to the multivesicular body. APOE is an apolipoprotein, a protein associating with lipid particles, that mainly functions in lipoprotein-mediated lipid transport between organs via the plasma and interstitial fluids. APOE is a core component of plasma lipoproteins and is involved in their production, conversion and clearance. Apolipoproteins are amphipathic molecules that interact both with lipids of the lipoprotein particle core and the aqueous environment of the plasma. As such, APOE associates with chylomicrons, chylomicron remnants, very low density lipoproteins (VLDL) and intermediate density lipoproteins (IDL) but shows a preferential binding to high-density lipoproteins (HDL). It also binds a wide range of cellular receptors including the LDL receptor/LDLR, the LDL receptor-related proteins LRP1, LRP2 and LRP8 and the very low-density lipoprotein receptor/VLDLR that mediate the cellular uptake of the APOE-containing lipoprotein particles. Finally, APOE also has a heparin-binding activity and binds heparan-sulfate proteoglycans on the surface of cells, a property that supports the capture and the receptor-mediated uptake of APOE-containing lipoproteins by cells. A main function of APOE is to mediate lipoprotein clearance through the uptake of chylomicrons, VLDLs, and HDLs by hepatocytes. APOE is also involved in the biosynthesis by the liver of VLDLs as well as their uptake by peripheral tissues ensuring the delivery of triglycerides and energy storage in muscle, heart and adipose tissues. By participating in the lipoprotein-mediated distribution of lipids among tissues, APOE plays a critical role in plasma and tissues lipid homeostasis. APOE is also involved in two steps of reverse cholesterol transport, the HDLs-mediated transport of cholesterol from peripheral tissues to the liver, and thereby plays an important role in cholesterol homeostasis. First, it is functionally associated with ABCA1 in the biogenesis of HDLs in tissues. Second, it is enriched in circulating HDLs and mediates their uptake by hepatocytes. APOE also plays an important role in lipid transport in the central nervous system, regulating neuron survival and sprouting. The chain is Apolipoprotein E (APOE) from Pongo pygmaeus (Bornean orangutan).